Consider the following 284-residue polypeptide: Tegument protein UL23 (284 aa).

Belongs to the herpesviridae US22 family. As to quaternary structure, interacts with host NMI; this interaction inhibits NMI interaction with STAT1.

It localises to the virion tegument. Its subcellular location is the host cytoplasm. Its function is as follows. Plays a role in the inhibition of host innate immune response by disrupting the interaction between NMI and STAT1. In turn, NMI-mediated transcription of interferon-gamma stimulated genes is inhibited. In Homo sapiens (Human), this protein is Tegument protein UL23 (UL23).